The chain runs to 414 residues: Cytochrome c-554 (414 aa).

Positions 1–24 are cleaved as a signal peptide; the sequence is MQSSRPSDRQLAIVVSVAVGIVVA. Heme-binding residues include Met110, Cys131, Cys134, His135, Met154, Cys179, Cys182, His183, Met283, Cys294, Cys297, His298, Cys378, Cys381, and His382.

Post-translationally, binds 4 heme groups per subunit. In terms of processing, the N-terminus is blocked.

The protein resides in the periplasm. Serves as the immediate electron donor to the oxidized BChl2 (bacteriochlorophyll dimer) that is oxidized in the first step of light-induced charge separation. Can also oxidize low-potential substrates. The sequence is that of Cytochrome c-554 (puf2C) from Chloroflexus aurantiacus (strain ATCC 29366 / DSM 635 / J-10-fl).